A 220-amino-acid polypeptide reads, in one-letter code: Photosynthetic NDH subunit of lumenal location 3, chloroplastic (220 aa).

The transit peptide at 1-35 (MAHFIDLNSLTNTLPSLPKLPESRKTGKSSGFACR) directs the protein to the chloroplast. The transit peptide at 36–77 (RTEEFQEPDSVQITRRMTLGFAVSIGLTGILGENNVSLAQDN) directs the protein to the thylakoid.

This sequence belongs to the PsbQ family. In terms of assembly, part of the chloroplast NDH complex, composed of a mixture of chloroplast and nucleus encoded subunits. Component of the NDH lumenal subcomplex, at least composed of PnsL1, PnsL2, PnsL3, PnsL4 and PnsL5.

Its subcellular location is the plastid. The protein resides in the chloroplast thylakoid membrane. NDH shuttles electrons from NAD(P)H:plastoquinone, via FMN and iron-sulfur (Fe-S) centers, to quinones in the photosynthetic chain and possibly in a chloroplast respiratory chain. The immediate electron acceptor for the enzyme in this species is believed to be plastoquinone. Couples the redox reaction to proton translocation, and thus conserves the redox energy in a proton gradient. Required for both formation and activity of the chloroplast NAD(P)H dehydrogenase (NDH) complex. The protein is Photosynthetic NDH subunit of lumenal location 3, chloroplastic of Arabidopsis thaliana (Mouse-ear cress).